The following is a 699-amino-acid chain: PTS system glucose-specific EIICBA component (699 aa).

The PTS EIIC type-1 domain maps to 3 to 424; the sequence is KALFGVLQKI…FNLKTPGRED (422 aa). 11 helical membrane-spanning segments follow: residues 16–36, 66–86, 89–109, 139–159, 180–200, 233–253, 283–303, 313–333, 338–358, 365–385, and 388–408; these read LMLP…GNAM, IVFD…LANG, VAGI…SAVL, IPTL…AALL, FVPI…LVIW, LIPF…FFSY, FMTG…LAIY, LVAG…ITEP, FLFV…LSFM, VKIG…GILP, and TAWW…YFGF. Residues 439–520 enclose the PTS EIIB type-1 domain; the sequence is GDLPYEILQA…QDIIAGRKPR (82 aa). Cys-461 acts as the Phosphocysteine intermediate; for EIIB activity in catalysis. The 105-residue stretch at 568–672 folds into the PTS EIIA type-1 domain; it reads DQVFSGKMMG…SLMTPIVFTN (105 aa). His-620 (tele-phosphohistidine intermediate; for EIIA activity) is an active-site residue.

Its subcellular location is the cell membrane. The enzyme catalyses N(pros)-phospho-L-histidyl-[protein] + D-glucose(out) = D-glucose 6-phosphate(in) + L-histidyl-[protein]. The catalysed reaction is D-glucosamine(out) + N(pros)-phospho-L-histidyl-[protein] = D-glucosamine 6-phosphate(in) + L-histidyl-[protein]. In terms of biological role, the phosphoenolpyruvate-dependent sugar phosphotransferase system (sugar PTS), a major carbohydrate active transport system, catalyzes the phosphorylation of incoming sugar substrates concomitantly with their translocation across the cell membrane. This system is involved in glucose transport. The system can also transport glucosamine. Its function is as follows. In addition, plays an important role in the phosphorylation of EIIA-deficient PTS transporters. The EIIA domain can transfer a phosphoryl group to EIIA-deficient PTS transporters, enabling growth with maltose, N-acetylglucosamine, sucrose or trehalose as the sole carbon source. The protein is PTS system glucose-specific EIICBA component (ptsG) of Bacillus subtilis (strain 168).